Reading from the N-terminus, the 216-residue chain is Protein Syd (216 aa).

This sequence belongs to the Syd family.

The protein localises to the cell inner membrane. In terms of biological role, interacts with the SecY protein in vivo. May bind preferentially to an uncomplexed state of SecY, thus functioning either as a chelating agent for excess SecY in the cell or as a regulatory factor that negatively controls the translocase function. This Shewanella baltica (strain OS195) protein is Protein Syd.